Consider the following 121-residue polypeptide: Large ribosomal subunit protein bL12 (121 aa).

It belongs to the bacterial ribosomal protein bL12 family. As to quaternary structure, homodimer. Part of the ribosomal stalk of the 50S ribosomal subunit. Forms a multimeric L10(L12)X complex, where L10 forms an elongated spine to which 2 to 4 L12 dimers bind in a sequential fashion. Binds GTP-bound translation factors.

Functionally, forms part of the ribosomal stalk which helps the ribosome interact with GTP-bound translation factors. Is thus essential for accurate translation. This is Large ribosomal subunit protein bL12 from Psychromonas ingrahamii (strain DSM 17664 / CCUG 51855 / 37).